A 142-amino-acid polypeptide reads, in one-letter code: MKTFSAKPHEVKRNWFVIDATDKVLGRVASEVALRLRGKHKPEFTPHVDTGDFIIVINAAKLRVTGAKTTDKKYYRHSGYPGGIYETTFGKMQQRFPGRALEKAVKGMLPKGPLGYAMIKKLKVYAEGSHPHEAQQPQVLEI.

This sequence belongs to the universal ribosomal protein uL13 family. As to quaternary structure, part of the 50S ribosomal subunit.

Functionally, this protein is one of the early assembly proteins of the 50S ribosomal subunit, although it is not seen to bind rRNA by itself. It is important during the early stages of 50S assembly. This chain is Large ribosomal subunit protein uL13, found in Ralstonia nicotianae (strain ATCC BAA-1114 / GMI1000) (Ralstonia solanacearum).